A 221-amino-acid polypeptide reads, in one-letter code: Probable molybdenum cofactor guanylyltransferase (221 aa).

GTP is bound by residues 17–19 (LAG), Lys29, Asp74, and Asp103. Asp103 contributes to the Mg(2+) binding site.

This sequence belongs to the MobA family. Requires Mg(2+) as cofactor.

It is found in the cytoplasm. The enzyme catalyses Mo-molybdopterin + GTP + H(+) = Mo-molybdopterin guanine dinucleotide + diphosphate. Functionally, transfers a GMP moiety from GTP to Mo-molybdopterin (Mo-MPT) cofactor (Moco or molybdenum cofactor) to form Mo-molybdopterin guanine dinucleotide (Mo-MGD) cofactor. This chain is Probable molybdenum cofactor guanylyltransferase, found in Peptoclostridium acidaminophilum (Eubacterium acidaminophilum).